We begin with the raw amino-acid sequence, 2492 residues long: Transcriptional regulator ATRX (2492 aa).

Positions 1 to 147 are disordered; sequence MTAEPMSESK…KDDFKGPEFR (147 aa). Lys10 is covalently cross-linked (Glycyl lysine isopeptide (Lys-Gly) (interchain with G-Cter in SUMO2)). Positions 17–27 are enriched in basic and acidic residues; sequence KLHDFLAHSSE. Residues Ser25 and Ser34 each carry the phosphoserine modification. Residues 40–57 show a composition bias toward polar residues; that stretch reads MNQNTDKISGSGSNSDMM. Residues 58-72 are compositionally biased toward basic and acidic residues; sequence ENSKEEGTSSSEKSK. A Phosphotyrosine modification is found at Tyr89. Phosphoserine occurs at positions 92 and 112. The span at 92–108 shows a compositional bias: acidic residues; the sequence is SDDEKPLDDETVNEDAS. Over residues 135-147 the composition is skewed to basic and acidic residues; that stretch reads NEDKDDFKGPEFR. Residues Lys138 and Lys142 each participate in a glycyl lysine isopeptide (Lys-Gly) (interchain with G-Cter in SUMO2) cross-link. An ADD domain is found at 159-296; the sequence is KRGEDGLHGI…LEQLLQQNKK (138 aa). Residues 170–206 form a GATA-type; atypical zinc finger; that stretch reads SCTACGQQVNHFQKDSIYRHPSLQVLICKNCFKYYMS. The residue at position 213 (Ser213) is a Phosphoserine. The PHD-type; atypical zinc finger occupies 217–272; that stretch reads DEQCRWCAEGGNLICCDFCHNAFCKKCILRNLGRKELSTIMDENNQWYCYICHPEP. Lys299 is covalently cross-linked (Glycyl lysine isopeptide (Lys-Gly) (interchain with G-Cter in SUMO2)). Residue Ser316 is modified to Phosphoserine. Residue Lys438 forms a Glycyl lysine isopeptide (Lys-Gly) (interchain with G-Cter in SUMO2) linkage. A compositionally biased stretch (basic and acidic residues) spans 445–502; sequence KGEKPCALEKKDISKSEAKLSRKQVDSEHMHQNVPTEEQRTNKSTGGEHKKSDRKEEP. Disordered regions lie at residues 445-516 and 535-576; these read KGEK…LDMD and AMEV…GIKS. Over residues 550–567 the composition is skewed to polar residues; sequence SGTEQEVESSSVKLNISS. A PxVxL motif motif is present at residues 581 to 594; the sequence is KVTKELYVKLTPVS. The residue at position 591 (Thr591) is a Phosphothreonine. The interval 593-616 is disordered; that stretch reads VSLSNSPIKGADCQEVPQDKDGYK. Ser594 and Ser598 each carry phosphoserine. Residue Lys623 forms a Glycyl lysine isopeptide (Lys-Gly) (interchain with G-Cter in SUMO1); alternate linkage. A Glycyl lysine isopeptide (Lys-Gly) (interchain with G-Cter in SUMO2); alternate cross-link involves residue Lys623. Ser634 bears the Phosphoserine mark. The segment at 649–956 is disordered; that stretch reads EESDLRRSPR…KHLKTKTCKK (308 aa). The residue at position 674 (Thr674) is a Phosphothreonine. 4 positions are modified to phosphoserine: Ser675, Ser677, Ser729, and Ser731. The span at 755 to 777 shows a compositional bias: basic and acidic residues; that stretch reads NEIHTNHKTLYDLKTQAGKDDKG. Phosphoserine occurs at positions 784, 819, 849, 850, 875, and 876. The span at 843–864 shows a compositional bias: basic and acidic residues; that stretch reads NTKDFDSSEDEKHSKKGMDNQG. Basic and acidic residues predominate over residues 878-887; that stretch reads DAERKQERET. Ser889 bears the Phosphoserine mark. 2 stretches are compositionally biased toward basic and acidic residues: residues 894–909 and 920–944; these read TVDKDTTIMELRDRLP and GVDKLSGKEESFTSLEVRKVAETKE. Residues 945-955 are compositionally biased toward basic residues; it reads KSKHLKTKTCK. A Phosphoserine modification is found at Ser962. N6-acetyllysine is present on Lys967. Positions 968–1004 are enriched in basic and acidic residues; it reads FLKKDQSDETSEDDKKQSKKGTEEKKKPSDFKKKVIK. The tract at residues 968-1479 is disordered; it reads FLKKDQSDET…SKSPGKGRKK (512 aa). Residue Ser974 is modified to Phosphoserine. Phosphothreonine is present on Thr977. A Glycyl lysine isopeptide (Lys-Gly) (interchain with G-Cter in SUMO2) cross-link involves residue Lys1004. Phosphoserine is present on residues Ser1011, Ser1012, and Ser1013. The segment covering 1015–1027 has biased composition (basic and acidic residues); it reads GTEKLPEREEICH. The span at 1045–1055 shows a compositional bias: basic residues; sequence KSKKIRDKTSK. Residues 1056–1082 show a composition bias toward basic and acidic residues; sequence KKDELSDYAEKSTGKGDSCDSSEDKKS. Ser1061 carries the post-translational modification Phosphoserine. A Phosphotyrosine modification is found at Tyr1063. The span at 1090 to 1102 shows a compositional bias: basic residues; the sequence is EKKRCKLLGKSSR. A compositionally biased stretch (basic and acidic residues) spans 1103–1139; sequence KRQDCSSSDTEKYSMKEDGCNSSDKRLKRIELRERRN. The segment covering 1167 to 1195 has biased composition (basic residues); it reads KKKQRTSSKKKAVIVKEKKRNSLRTSTKR. Positions 1189–1326 are interaction with DAXX; it reads LRTSTKRKQA…KNQVNSESDS (138 aa). Residues 1233–1246 are compositionally biased toward polar residues; it reads LVLSSHTGFCQSSG. Residues Ser1244, Ser1245, and Ser1253 each carry the phosphoserine modification. Over residues 1267–1281 the composition is skewed to basic and acidic residues; the sequence is PENRIAKKMLLEEIK. The segment covering 1286–1297 has biased composition (acidic residues); the sequence is SDEDGSSDDEPE. Over residues 1298–1308 the composition is skewed to basic and acidic residues; the sequence is EGKKRTGKQNE. Phosphoserine occurs at positions 1322, 1324, and 1326. Residues 1334-1345 show a composition bias toward basic residues; sequence PRYRHRLLRHKL. Ser1348 and Ser1352 each carry phosphoserine. Basic and acidic residues-rich tracts occupy residues 1353-1368 and 1408-1417; these read GEEKKTKPKEHKEVKG and KKAELEENQR. Residues 1419–1428 are compositionally biased toward basic residues; the sequence is YKQKKKRRRI. Residues 1443 to 1468 show a composition bias toward acidic residues; that stretch reads EEEEEEKEEEEEEEEEEEEEEEDEND. Residue Lys1488 forms a Glycyl lysine isopeptide (Lys-Gly) (interchain with G-Cter in SUMO2) linkage. Phosphoserine is present on Ser1527. Thr1529 bears the Phosphothreonine mark. One can recognise a Helicase ATP-binding domain in the interval 1581–1768; that stretch reads KTKKSPGSGC…HCMVNFIKEN (188 aa). Position 1594–1601 (1594–1601) interacts with ATP; sequence HCMGLGKT. The DEGH box motif lies at 1719-1722; it reads DEGH. Ser1906 and Ser1913 each carry phosphoserine. The segment at 1913–2000 is disordered; it reads SDSDETSMSL…SSNPSSPAPD (88 aa). The segment covering 1929-1938 has biased composition (basic residues); sequence KKKKKGKKGK. Lys1982 participates in a covalent cross-link: Glycyl lysine isopeptide (Lys-Gly) (interchain with G-Cter in SUMO1); alternate. Lys1982 is covalently cross-linked (Glycyl lysine isopeptide (Lys-Gly) (interchain with G-Cter in SUMO2); alternate). A Glycyl lysine isopeptide (Lys-Gly) (interchain with G-Cter in SUMO2) cross-link involves residue Lys1987. The span at 1990 to 1999 shows a compositional bias: low complexity; sequence SSSNPSSPAP. Phosphoserine is present on residues Ser1992 and Ser1996. Residues 2010–2280 form an interaction with MECP2 region; it reads DAEVLEHSGK…RKAAWAEYEA (271 aa). Positions 2025 to 2205 constitute a Helicase C-terminal domain; the sequence is EILRMAEEIG…ERHFTMNELT (181 aa). Ser2220 is subject to Phosphoserine. The interval 2462–2492 is disordered; sequence PVAGGMQPPPLQRAPPPMRSKNPGPSQGKSM. The segment covering 2468 to 2479 has biased composition (pro residues); it reads QPPPLQRAPPPM. Residues Arg2474 and Arg2480 each carry the omega-N-methylarginine modification.

This sequence belongs to the SNF2/RAD54 helicase family. As to quaternary structure, interacts with DAXX to form the chromatin remodeling complex ATRX:DAXX. Probably binds EZH2. Binds annexin V in a calcium and phosphatidylcholine/phosphatidylserine-dependent manner. Interacts directly with CBX5 via the PxVxL motif. Interacts with RAD50, MRE11 and NBN; indicative for an association with the MRN complex. Interacts with histone MACROH2A1. Interacts with histone H3 peptides methylated at 'Lys-10' with preferences H3K9me3 &gt; H3K9me2 &gt; H3K9me1. Interacts with histone H3 peptides unmethylated at 'Lys-5' (H3K4me0). Interacts with MECP2, SMC1 and SMC3. Interacts with SETDB1, TRIM28 and ZNF274. Post-translationally, phosphorylated at serine residues during mitose. Phosphorylation may promote the release from the nuclear matrix and progression to mitosis. Ubiquitous.

It localises to the nucleus. Its subcellular location is the chromosome. The protein localises to the telomere. It is found in the PML body. The enzyme catalyses ATP + H2O = ADP + phosphate + H(+). Its function is as follows. Involved in transcriptional regulation and chromatin remodeling. Facilitates DNA replication in multiple cellular environments and is required for efficient replication of a subset of genomic loci. Binds to DNA tandem repeat sequences in both telomeres and euchromatin and in vitro binds DNA quadruplex structures. May help stabilizing G-rich regions into regular chromatin structures by remodeling G4 DNA and incorporating H3.3-containing nucleosomes. Catalytic component of the chromatin remodeling complex ATRX:DAXX which has ATP-dependent DNA translocase activity and catalyzes the replication-independent deposition of histone H3.3 in pericentric DNA repeats outside S-phase and telomeres, and the in vitro remodeling of H3.3-containing nucleosomes. Its heterochromatin targeting is proposed to involve a combinatorial readout of histone H3 modifications (specifically methylation states of H3K9 and H3K4) and association with CBX5. Involved in maintaining telomere structural integrity in embryonic stem cells which probably implies recruitment of CBX5 to telomeres. Reports on the involvement in transcriptional regulation of telomeric repeat-containing RNA (TERRA) are conflicting; according to a report, it is not sufficient to decrease chromatin condensation at telomeres nor to increase expression of telomeric RNA in fibroblasts. May be involved in telomere maintenance via recombination in ALT (alternative lengthening of telomeres) cell lines. Acts as a negative regulator of chromatin incorporation of transcriptionally repressive histone MACROH2A1, particularily at telomeres and the alpha-globin cluster in erythroleukemic cells. Participates in the allele-specific gene expression at the imprinted IGF2/H19 gene locus. On the maternal allele, required for the chromatin occupancy of SMC1 and CTCTF within the H19 imprinting control region (ICR) and involved in esatblishment of histone tails modifications in the ICR. May be involved in brain development and facial morphogenesis. Binds to zinc-finger coding genes with atypical chromatin signatures and regulates its H3K9me3 levels. Forms a complex with ZNF274, TRIM28 and SETDB1 to facilitate the deposition and maintenance of H3K9me3 at the 3' exons of zinc-finger genes. This chain is Transcriptional regulator ATRX (ATRX), found in Homo sapiens (Human).